Here is a 644-residue protein sequence, read N- to C-terminus: Threonine--tRNA ligase (644 aa).

A TGS domain is found at 1-61 (MNVTIEGQVF…ADTTTIEPVF (61 aa)). Residues 241 to 532 (DHRKLGQQLD…LTEHFAGAFP (292 aa)) form a catalytic region. Zn(2+) is bound by residues Cys333, His384, and His509.

This sequence belongs to the class-II aminoacyl-tRNA synthetase family. As to quaternary structure, homodimer. Requires Zn(2+) as cofactor.

The protein resides in the cytoplasm. It catalyses the reaction tRNA(Thr) + L-threonine + ATP = L-threonyl-tRNA(Thr) + AMP + diphosphate + H(+). Functionally, catalyzes the attachment of threonine to tRNA(Thr) in a two-step reaction: L-threonine is first activated by ATP to form Thr-AMP and then transferred to the acceptor end of tRNA(Thr). Also edits incorrectly charged L-seryl-tRNA(Thr). The protein is Threonine--tRNA ligase of Nitratidesulfovibrio vulgaris (strain DSM 19637 / Miyazaki F) (Desulfovibrio vulgaris).